Reading from the N-terminus, the 39-residue chain is Cytochrome b6-f complex subunit 5 (39 aa).

Residues 5 to 25 form a helical membrane-spanning segment; that stretch reads LLCGIVLGLVPITLLGLFVSA.

This sequence belongs to the PetG family. As to quaternary structure, the 4 large subunits of the cytochrome b6-f complex are cytochrome b6, subunit IV (17 kDa polypeptide, PetD), cytochrome f and the Rieske protein, while the 4 small subunits are PetG, PetL, PetM and PetN. The complex functions as a dimer.

It is found in the cellular thylakoid membrane. Functionally, component of the cytochrome b6-f complex, which mediates electron transfer between photosystem II (PSII) and photosystem I (PSI), cyclic electron flow around PSI, and state transitions. PetG is required for either the stability or assembly of the cytochrome b6-f complex. In Prochlorococcus marinus subsp. pastoris (strain CCMP1986 / NIES-2087 / MED4), this protein is Cytochrome b6-f complex subunit 5.